Here is a 221-residue protein sequence, read N- to C-terminus: CDP-diacylglycerol--glycerol-3-phosphate 3-phosphatidyltransferase (221 aa).

5 consecutive transmembrane segments (helical) span residues 8 to 28 (ILTV…LYFH), 34 to 54 (WFAL…GYLA), 75 to 95 (MVVI…WLIL), 133 to 153 (AQMV…LEGI), and 187 to 207 (ATWL…ITGW).

Belongs to the CDP-alcohol phosphatidyltransferase class-I family.

It is found in the cell membrane. The enzyme catalyses a CDP-1,2-diacyl-sn-glycerol + sn-glycerol 3-phosphate = a 1,2-diacyl-sn-glycero-3-phospho-(1'-sn-glycero-3'-phosphate) + CMP + H(+). Its pathway is phospholipid metabolism; phosphatidylglycerol biosynthesis; phosphatidylglycerol from CDP-diacylglycerol: step 1/2. Its function is as follows. This protein catalyzes the committed step to the synthesis of the acidic phospholipids. In Cereibacter sphaeroides (strain ATCC 17023 / DSM 158 / JCM 6121 / CCUG 31486 / LMG 2827 / NBRC 12203 / NCIMB 8253 / ATH 2.4.1.) (Rhodobacter sphaeroides), this protein is CDP-diacylglycerol--glycerol-3-phosphate 3-phosphatidyltransferase (pgsA).